Reading from the N-terminus, the 248-residue chain is 3-deoxy-manno-octulosonate cytidylyltransferase (248 aa).

It belongs to the KdsB family.

Its subcellular location is the cytoplasm. It catalyses the reaction 3-deoxy-alpha-D-manno-oct-2-ulosonate + CTP = CMP-3-deoxy-beta-D-manno-octulosonate + diphosphate. It participates in nucleotide-sugar biosynthesis; CMP-3-deoxy-D-manno-octulosonate biosynthesis; CMP-3-deoxy-D-manno-octulosonate from 3-deoxy-D-manno-octulosonate and CTP: step 1/1. The protein operates within bacterial outer membrane biogenesis; lipopolysaccharide biosynthesis. Its function is as follows. Activates KDO (a required 8-carbon sugar) for incorporation into bacterial lipopolysaccharide in Gram-negative bacteria. In Escherichia coli O127:H6 (strain E2348/69 / EPEC), this protein is 3-deoxy-manno-octulosonate cytidylyltransferase.